The primary structure comprises 1565 residues: Synemin (1565 aa).

Residues 1–10 (MLSWRLQTGP) are head. A coil 1A region spans residues 11–49 (EKAELQELNARLYDYVCRVRELERENLLLEEELRGRRGR). The tract at residues 11–320 (EKAELQELNA…YRALLEGESN (310 aa)) is interaction with DMD and UTRN. The 312-residue stretch at 11–322 (EKAELQELNA…ALLEGESNPE (312 aa)) folds into the IF rod domain. The linker 1 stretch occupies residues 50–58 (EGLWAEGQA). Residues 59–163 (RCAEEARSLR…ELRARAASLT (105 aa)) form a coil 1B region. The linker 12 stretch occupies residues 164-186 (MHFRARATGPAAPPPRLREVHDS). Residues 187-300 (YALLVAESWR…LRDYQDLLQV (114 aa)) form a coil 2 region. Residues 301–1565 (KTGLSLEVAT…EEEENDGHWF (1265 aa)) form a tail region. Residues 401–421 (SGYSSSATTQQENSYGKAVSS) form a disordered region. Residues 402–421 (GYSSSATTQQENSYGKAVSS) show a composition bias toward polar residues. At serine 429 the chain carries Phosphoserine. The tract at residues 472 to 609 (YRDRRDKVAA…VKDAGGGTGR (138 aa)) is disordered. Positions 498–577 (KKTEVKATRE…KEKSVREREV (80 aa)) are enriched in basic and acidic residues. A phosphothreonine mark is found at threonine 598 and threonine 651. Residues serine 653 and serine 777 each carry the phosphoserine modification. A compositionally biased stretch (basic and acidic residues) spans 1019-1040 (LSKDEASEMEKAVESVVRESLS). Residues 1019 to 1060 (LSKDEASEMEKAVESVVRESLSRQRSPAPGSPDEEGGAEAPA) are disordered. Serine 1044, serine 1049, serine 1077, serine 1087, serine 1181, and serine 1184 each carry phosphoserine. The segment at 1080-1105 (SEVAGGASHSSGQRTPQGPVSATVEV) is disordered. The segment covering 1087–1105 (SHSSGQRTPQGPVSATVEV) has biased composition (polar residues). Residues 1152–1463 (VSAGGDLSQA…GPKETSFTFQ (312 aa)) are interaction with TLN1 and VCL. Disordered regions lie at residues 1198–1221 (EAWG…GRHS) and 1332–1415 (QLGE…ETSE). An interaction with DMD and UTRN region spans residues 1244-1563 (GKVGDYFATE…DNEEEENDGH (320 aa)). The span at 1354–1379 (ATHSHTSGRQTVMTEKSTFQSVVSES) shows a compositional bias: polar residues. Serine 1435 is modified (phosphoserine). An Omega-N-methylarginine modification is found at arginine 1487. Positions 1505 to 1525 (FKASAGEGDQAHREQGKEQAM) are disordered. Basic and acidic residues predominate over residues 1513 to 1525 (DQAHREQGKEQAM).

The protein belongs to the intermediate filament family. In terms of assembly, interacts with GFAP and VIM. Isoform 1 interacts with TLN1 and VCL. Isoform 2 interacts with DES and DTNA. Isoform 1 and isoform 2 interact with DMD and UTRN. Isoform 2 is strongly detected in adult heart, fetal skeletal muscles and fetal heart. Isoform 1 is weakly detected in fetal heart and also in fetal skeletal muscle. Isoform 1 and isoform 2 are detected in adult bladder (at protein level). The mRNA is predominantly expressed in heart and muscle with some expression in brain which may be due to tissue-specific isoforms.

Its subcellular location is the cytoplasm. The protein resides in the cytoskeleton. It localises to the cell junction. It is found in the adherens junction. Functionally, type-VI intermediate filament (IF) which plays an important cytoskeletal role within the muscle cell cytoskeleton. It forms heteromeric IFs with desmin and/or vimentin, and via its interaction with cytoskeletal proteins alpha-dystrobrevin, dystrophin, talin-1, utrophin and vinculin, is able to link these heteromeric IFs to adherens-type junctions, such as to the costameres, neuromuscular junctions, and myotendinous junctions within striated muscle cells. The protein is Synemin of Homo sapiens (Human).